Reading from the N-terminus, the 614-residue chain is Nuclear receptor subfamily 1 group D member 1 (614 aa).

Residues 1–12 (MTTLDSNNNTGG) are compositionally biased toward polar residues. Positions 1 to 70 (MTTLDSNNNT…TQDPARSFGS (70 aa)) are required for phosphorylation by CSNK1E and cytoplasmic localization. Residues 1–119 (MTTLDSNNNT…SSRVSPSKST (119 aa)) are disordered. The interval 1–128 (MTTLDSNNNT…TSNITKLNGM (128 aa)) is modulating. Over residues 14-34 (ITYIGSSGSSPSRTSPESLYS) the composition is skewed to low complexity. Positions 35–48 (DNSNGSFQSLTQGC) are enriched in polar residues. The crucial for activation of GJA1 stretch occupies residues 49-284 (PTYFPPSPTG…PPRSPSPEPT (236 aa)). Residues S55 and S59 each carry the phosphoserine; by GSK3-beta modification. Positions 69 to 102 (GSIPPSLSDDGSPSSSSSSSSSSSSFYNGSPPGS) are enriched in low complexity. A DNA-binding region (nuclear receptor) is located at residues 129–205 (VLLCKVCGDV…VGMSRDAVRF (77 aa)). 2 consecutive NR C4-type zinc fingers follow at residues 132-152 (CKVC…CEGC) and 169-193 (CLKN…FKKC). N6-acetyllysine; by KAT5 is present on residues K191 and K192. Residues 233 to 243 (SQCPLETSPTQ) show a composition bias toward polar residues. Disordered regions lie at residues 233–285 (SQCP…EPTV) and 311–345 (PGNF…DNNT). Residues 244–261 (HPTPGPMGPSPPPAPVPS) show a composition bias toward pro residues. T274 carries the post-translational modification Phosphothreonine; by CDK1. The NR LBD domain maps to 284-614 (TVEDVISQVA…KLLSFRVDAQ (331 aa)). Positions 311–324 (PGNFNANHASGSPP) are enriched in polar residues. K400 is subject to N6-acetyllysine. C418 lines the heme pocket. At K591 the chain carries N6-acetyllysine. H602 serves as a coordination point for heme.

The protein belongs to the nuclear hormone receptor family. NR1 subfamily. Binds DNA as a monomer or a homodimer. Interacts with C1D, NR2E3 and SP1. Interacts with OPHN1 (via C-terminus). Interacts with ZNHIT1. Interacts with PER2; the interaction associates PER2 to BMAL1 promoter region. Interacts with CRY1. Interacts with CCAR2. Interacts with SIAH2. Interacts with CDK1. Interacts with FBXW7. Interacts with HUWE1. Interacts with NR0B2. Interacts with NFIL3. Interacts (via domain NR LBD) with HSP90AA1 and HSP90AB1. In terms of processing, ubiquitinated, leading to its proteasomal degradation. Ubiquitinated by SIAH2; leading to its proteasomal degradation. Ubiquitinated by the SCF(FBXW7) complex when phosphorylated by CDK1 leading to its proteasomal degradation. Rapidly ubiquitinated in response to inflammatory triggers and sumoylation is a prerequisite to its ubiquitination. Post-translationally, sumoylated by UBE2I, desumoylated by SENP1, and sumoylation is a prerequisite to its ubiquitination. Phosphorylated by CSNK1E; phosphorylation enhances its cytoplasmic localization. In terms of processing, undergoes lysosome-mediated degradation in a time-dependent manner in the liver. As to expression, widely expressed. Expressed at high levels in the liver, adipose tissue, skeletal muscle and brain. Also expressed in endothelial cells (ECs), vascular smooth muscle cells (VSMCs) and macrophages. Expression oscillates diurnally in the suprachiasmatic nucleus (SCN) of the hypothalamus as well as in peripheral tissues. Expression increases during the differentiation of pre-adipocytes into mature adipocytes. Expressed at high levels in some squamous carcinoma cell lines.

The protein resides in the nucleus. The protein localises to the cytoplasm. It localises to the cell projection. It is found in the dendrite. Its subcellular location is the dendritic spine. In terms of biological role, transcriptional repressor which coordinates circadian rhythm and metabolic pathways in a heme-dependent manner. Integral component of the complex transcription machinery that governs circadian rhythmicity and forms a critical negative limb of the circadian clock by directly repressing the expression of core clock components BMAL1, CLOCK and CRY1. Also regulates genes involved in metabolic functions, including lipid and bile acid metabolism, adipogenesis, gluconeogenesis and the macrophage inflammatory response. Acts as a receptor for heme which stimulates its interaction with the NCOR1/HDAC3 corepressor complex, enhancing transcriptional repression. Recognizes two classes of DNA response elements within the promoter of its target genes and can bind to DNA as either monomers or homodimers, depending on the nature of the response element. Binds as a monomer to a response element composed of the consensus half-site motif 5'-[A/G]GGTCA-3' preceded by an A/T-rich 5' sequence (RevRE), or as a homodimer to a direct repeat of the core motif spaced by two nucleotides (RevDR-2). Acts as a potent competitive repressor of ROR alpha (RORA) function and regulates the levels of its ligand heme by repressing the expression of PPARGC1A, a potent inducer of heme synthesis. Regulates lipid metabolism by repressing the expression of APOC3 and by influencing the activity of sterol response element binding proteins (SREBPs); represses INSIG2 which interferes with the proteolytic activation of SREBPs which in turn govern the rhythmic expression of enzymes with key functions in sterol and fatty acid synthesis. Regulates gluconeogenesis via repression of G6PC1 and PEPCK and adipocyte differentiation via repression of PPARG. Regulates glucagon release in pancreatic alpha-cells via the AMPK-NAMPT-SIRT1 pathway and the proliferation, glucose-induced insulin secretion and expression of key lipogenic genes in pancreatic-beta cells. Positively regulates bile acid synthesis by increasing hepatic expression of CYP7A1 via repression of NR0B2 and NFIL3 which are negative regulators of CYP7A1. Modulates skeletal muscle oxidative capacity by regulating mitochondrial biogenesis and autophagy; controls mitochondrial biogenesis and respiration by interfering with the STK11-PRKAA1/2-SIRT1-PPARGC1A signaling pathway. Represses the expression of SERPINE1/PAI1, an important modulator of cardiovascular disease and the expression of inflammatory cytokines and chemokines in macrophages. Represses gene expression at a distance in macrophages by inhibiting the transcription of enhancer-derived RNAs (eRNAs). Plays a role in the circadian regulation of body temperature and negatively regulates thermogenic transcriptional programs in brown adipose tissue (BAT); imposes a circadian oscillation in BAT activity, increasing body temperature when awake and depressing thermogenesis during sleep. In concert with NR2E3, regulates transcriptional networks critical for photoreceptor development and function. In addition to its activity as a repressor, can also act as a transcriptional activator. In the ovarian granulosa cells acts as a transcriptional activator of STAR which plays a role in steroid biosynthesis. In collaboration with SP1, activates GJA1 transcription in a heme-independent manner. Represses the transcription of CYP2B10, CYP4A10 and CYP4A14. Represses the transcription of CES2. Represses and regulates the circadian expression of TSHB in a NCOR1-dependent manner. Negatively regulates the protein stability of NR3C1 and influences the time-dependent subcellular distribution of NR3C1, thereby affecting its transcriptional regulatory activity. Plays a critical role in the circadian control of neutrophilic inflammation in the lung; under resting, non-stress conditions, acts as a rhythmic repressor to limit inflammatory activity whereas in the presence of inflammatory triggers undergoes ubiquitin-mediated degradation thereby relieving inhibition of the inflammatory response. Plays a key role in the circadian regulation of microglial activation and neuroinflammation; suppresses microglial activation through the NF-kappaB pathway in the central nervous system. Plays a role in the regulation of the diurnal rhythms of lipid and protein metabolism in the skeletal muscle via transcriptional repression of genes controlling lipid and amino acid metabolism in the muscle. The protein is Nuclear receptor subfamily 1 group D member 1 (NR1D1) of Homo sapiens (Human).